A 293-amino-acid polypeptide reads, in one-letter code: 4-hydroxybenzoate octaprenyltransferase (293 aa).

The next 7 membrane-spanning stretches (helical) occupy residues 25–45, 48–68, 101–121, 142–162, 165–185, 223–243, and 271–291; these read IGNFLLLWPMLWGLWIAAKGL, LKVLVVFVLGVLIMRAAGCVI, LFVVLCLVAFGLVLLMNPLTI, HFPQVHLGAAFGWAIPMAFAA, GAVAPVAWLLFLSAVLWATIY, VMLAVLVAAGLVVGLGAFWYL, and FLNNNWLGGLIFLGLLLDLHL.

It belongs to the UbiA prenyltransferase family. Mg(2+) is required as a cofactor.

Its subcellular location is the cell inner membrane. The enzyme catalyses all-trans-octaprenyl diphosphate + 4-hydroxybenzoate = 4-hydroxy-3-(all-trans-octaprenyl)benzoate + diphosphate. The protein operates within cofactor biosynthesis; ubiquinone biosynthesis. Functionally, catalyzes the prenylation of para-hydroxybenzoate (PHB) with an all-trans polyprenyl group. Mediates the second step in the final reaction sequence of ubiquinone-8 (UQ-8) biosynthesis, which is the condensation of the polyisoprenoid side chain with PHB, generating the first membrane-bound Q intermediate 3-octaprenyl-4-hydroxybenzoate. In Alkalilimnicola ehrlichii (strain ATCC BAA-1101 / DSM 17681 / MLHE-1), this protein is 4-hydroxybenzoate octaprenyltransferase.